The following is a 61-amino-acid chain: Small ribosomal subunit protein uS14 (61 aa).

Zn(2+)-binding residues include Cys24, Cys27, Cys40, and Cys43.

Belongs to the universal ribosomal protein uS14 family. Zinc-binding uS14 subfamily. Part of the 30S ribosomal subunit. Contacts proteins S3 and S10. The cofactor is Zn(2+).

In terms of biological role, binds 16S rRNA, required for the assembly of 30S particles and may also be responsible for determining the conformation of the 16S rRNA at the A site. The chain is Small ribosomal subunit protein uS14 from Pelobacter propionicus (strain DSM 2379 / NBRC 103807 / OttBd1).